We begin with the raw amino-acid sequence, 210 residues long: MSRLEDYLSVYFITDSEFGRTHEELAEMALRAGVRAIQFREKKLSTKRMYEIGKRLRALTRDYDALFFVNDRIDVALAVDADGVHIGQDDMPAFAAREIFPGYIGVSAGNVEEAKKDERFADYLGVGPVFPTKTKEDAGEAIGIEGLRRIVESVSVPVVAIGSINKQNAIEVLKTGVAGIAVISAIAAADDPERAARELVELVRRFKSGL.

Residues 38–42 (QFREK) and Asn70 each bind 4-amino-2-methyl-5-(diphosphooxymethyl)pyrimidine. Residues Asp71 and Asp90 each contribute to the Mg(2+) site. Ser107 provides a ligand contact to 4-amino-2-methyl-5-(diphosphooxymethyl)pyrimidine. 132-134 (TKT) provides a ligand contact to 2-[(2R,5Z)-2-carboxy-4-methylthiazol-5(2H)-ylidene]ethyl phosphate. Lys135 lines the 4-amino-2-methyl-5-(diphosphooxymethyl)pyrimidine pocket. 183 to 184 (IS) is a 2-[(2R,5Z)-2-carboxy-4-methylthiazol-5(2H)-ylidene]ethyl phosphate binding site.

It belongs to the thiamine-phosphate synthase family. Mg(2+) is required as a cofactor.

It catalyses the reaction 2-[(2R,5Z)-2-carboxy-4-methylthiazol-5(2H)-ylidene]ethyl phosphate + 4-amino-2-methyl-5-(diphosphooxymethyl)pyrimidine + 2 H(+) = thiamine phosphate + CO2 + diphosphate. The enzyme catalyses 2-(2-carboxy-4-methylthiazol-5-yl)ethyl phosphate + 4-amino-2-methyl-5-(diphosphooxymethyl)pyrimidine + 2 H(+) = thiamine phosphate + CO2 + diphosphate. The catalysed reaction is 4-methyl-5-(2-phosphooxyethyl)-thiazole + 4-amino-2-methyl-5-(diphosphooxymethyl)pyrimidine + H(+) = thiamine phosphate + diphosphate. Its pathway is cofactor biosynthesis; thiamine diphosphate biosynthesis; thiamine phosphate from 4-amino-2-methyl-5-diphosphomethylpyrimidine and 4-methyl-5-(2-phosphoethyl)-thiazole: step 1/1. Functionally, condenses 4-methyl-5-(beta-hydroxyethyl)thiazole monophosphate (THZ-P) and 2-methyl-4-amino-5-hydroxymethyl pyrimidine pyrophosphate (HMP-PP) to form thiamine monophosphate (TMP). In Archaeoglobus fulgidus (strain ATCC 49558 / DSM 4304 / JCM 9628 / NBRC 100126 / VC-16), this protein is Thiamine-phosphate synthase.